Here is a 441-residue protein sequence, read N- to C-terminus: NADH-quinone oxidoreductase subunit D 1 (441 aa).

It belongs to the complex I 49 kDa subunit family. NDH-1 is composed of 14 different subunits. Subunits NuoB, C, D, E, F, and G constitute the peripheral sector of the complex.

Its subcellular location is the cell membrane. It catalyses the reaction a quinone + NADH + 5 H(+)(in) = a quinol + NAD(+) + 4 H(+)(out). In terms of biological role, NDH-1 shuttles electrons from NADH, via FMN and iron-sulfur (Fe-S) centers, to quinones in the respiratory chain. The immediate electron acceptor for the enzyme in this species is believed to be a menaquinone. Couples the redox reaction to proton translocation (for every two electrons transferred, four hydrogen ions are translocated across the cytoplasmic membrane), and thus conserves the redox energy in a proton gradient. The chain is NADH-quinone oxidoreductase subunit D 1 from Salinispora arenicola (strain CNS-205).